A 420-amino-acid chain; its full sequence is Gamma-glutamyl phosphate reductase (420 aa).

The protein belongs to the gamma-glutamyl phosphate reductase family.

The protein localises to the cytoplasm. The catalysed reaction is L-glutamate 5-semialdehyde + phosphate + NADP(+) = L-glutamyl 5-phosphate + NADPH + H(+). It functions in the pathway amino-acid biosynthesis; L-proline biosynthesis; L-glutamate 5-semialdehyde from L-glutamate: step 2/2. In terms of biological role, catalyzes the NADPH-dependent reduction of L-glutamate 5-phosphate into L-glutamate 5-semialdehyde and phosphate. The product spontaneously undergoes cyclization to form 1-pyrroline-5-carboxylate. The polypeptide is Gamma-glutamyl phosphate reductase (Streptococcus pneumoniae serotype 19F (strain G54)).